We begin with the raw amino-acid sequence, 428 residues long: 3-phosphoshikimate 1-carboxyvinyltransferase (428 aa).

Residues lysine 22, serine 23, and arginine 27 each contribute to the 3-phosphoshikimate site. Residue lysine 22 participates in phosphoenolpyruvate binding. The phosphoenolpyruvate site is built by glycine 96 and arginine 124. Residues serine 170, serine 171, glutamine 172, serine 198, aspartate 314, asparagine 337, and lysine 341 each coordinate 3-phosphoshikimate. Glutamine 172 is a binding site for phosphoenolpyruvate. Aspartate 314 serves as the catalytic Proton acceptor. Phosphoenolpyruvate is bound by residues arginine 345, arginine 387, and lysine 412.

This sequence belongs to the EPSP synthase family. Monomer.

The protein localises to the cytoplasm. The catalysed reaction is 3-phosphoshikimate + phosphoenolpyruvate = 5-O-(1-carboxyvinyl)-3-phosphoshikimate + phosphate. It participates in metabolic intermediate biosynthesis; chorismate biosynthesis; chorismate from D-erythrose 4-phosphate and phosphoenolpyruvate: step 6/7. Functionally, catalyzes the transfer of the enolpyruvyl moiety of phosphoenolpyruvate (PEP) to the 5-hydroxyl of shikimate-3-phosphate (S3P) to produce enolpyruvyl shikimate-3-phosphate and inorganic phosphate. The sequence is that of 3-phosphoshikimate 1-carboxyvinyltransferase from Photobacterium profundum (strain SS9).